A 262-amino-acid polypeptide reads, in one-letter code: ABSCISIC ACID-INSENSITIVE 5-like protein 3 (262 aa).

Phosphoserine occurs at positions 21, 43, and 66. Thr104 carries the post-translational modification Phosphothreonine. The 64-residue stretch at 190-253 (VERRQKRMIK…SEPPPDPKWK (64 aa)) folds into the bZIP domain. A basic motif region spans residues 192–211 (RRQKRMIKNRESAARSRARK). The tract at residues 218–232 (LEIKVSRLEEENEKL) is leucine-zipper. Basic and acidic residues predominate over residues 239–252 (EKILPSEPPPDPKW). Residues 239-262 (EKILPSEPPPDPKWKLRRTNSASL) form a disordered region.

This sequence belongs to the bZIP family. ABI5 subfamily. As to quaternary structure, DNA-binding heterodimer with ABI5/DPBF1, DPBF2 or AREB3/DPBF3. Interacts with the AFP proteins AFP2, AFP3 and AFP4. As to expression, predominantly expressed in seeds.

Its subcellular location is the nucleus. Its function is as follows. Binds to the embryo specification element and the ABA-responsive element (ABRE) of the Dc3 gene promoter and to the ABRE of the Em1 gene promoter. Could participate in abscisic acid-regulated gene expression during seed development. The chain is ABSCISIC ACID-INSENSITIVE 5-like protein 3 (DPBF4) from Arabidopsis thaliana (Mouse-ear cress).